We begin with the raw amino-acid sequence, 308 residues long: ASVVGWGPHSLHACPALVLSNDVTIDAWCPLCGPHERLQFERIDTTLTCETHRINWTADGRPCGLNGTLFPRLHVSETRPQGPRRLWINCPLPAVRAQPGPVSLSPFERSPFQPYQCQLPSASSDGCPIIGHGLLPWNNLVTHPVLGKVLILNQMANFSLLPSFDTLLVDPLRLSVFAPDTRGAIRYLSTLLTLCPATCILPLGEPFSPNVPICRFPRDSNEPPLSEFELPPIQTPGLSWSVPAIDLFLTGPPSPCDRLHVWSSPQALQRFLHDPTLTWSELVASRKIRLDSPLKLQLLENEWLSRLF.

This is an uncharacterized protein from Bos taurus (Bovine).